A 92-amino-acid polypeptide reads, in one-letter code: MNDYKLEEDPVTKERTFKRFAPRKGDKIYQEFKKLYFYSDAYRPLKFACETIIEEYEDEISSLIAQETHYLADKLCSEKSDLCETSANHTEL.

It belongs to the canopy family.

This chain is Protein canopy homolog 1 (CNPY1), found in Homo sapiens (Human).